We begin with the raw amino-acid sequence, 91 residues long: MEKGECILYPCYFNAALSRAEGRRVPRNIAAKGPNANDVERALRRLGIACQAEEHHHPAHWARHEGRIIATYTGKKEALIKKVARAIEVRK.

It belongs to the SRP19 family. Part of the signal recognition particle protein translocation system, which is composed of SRP and FtsY. Archaeal SRP consists of a 7S RNA molecule of 300 nucleotides and two protein subunits: SRP54 and SRP19.

Its subcellular location is the cytoplasm. In terms of biological role, involved in targeting and insertion of nascent membrane proteins into the cytoplasmic membrane. Binds directly to 7S RNA and mediates binding of the 54 kDa subunit of the SRP. This is Signal recognition particle 19 kDa protein from Methanoregula boonei (strain DSM 21154 / JCM 14090 / 6A8).